The primary structure comprises 30 residues: Agglutinin alpha-1 chain (30 aa).

The region spanning 1-30 (GVAFDDGSYTGIREINFEYNRETAIGGXQV) is the Jacalin-type lectin domain.

The protein belongs to the jacalin lectin family. Tetramer of four alpha chains associated with two or four beta chains.

Its function is as follows. N-acetyl-galactosamine and D-galactose specific lectin. Binds the Tn-antigen structure GalNAc-alpha-1-O-Ser, the T-antigen structure Gal-beta1-3-GalNAc and IgA. This is Agglutinin alpha-1 chain from Morus nigra (Black mulberry).